Consider the following 421-residue polypeptide: N-succinylarginine dihydrolase (421 aa).

Residues A19–S28, N105, and H132–R133 each bind substrate. E167 is a catalytic residue. Substrate is bound at residue R199. H235 is an active-site residue. Residues D237 and N346 each contribute to the substrate site. C352 (nucleophile) is an active-site residue.

It belongs to the succinylarginine dihydrolase family. As to quaternary structure, homodimer.

The enzyme catalyses N(2)-succinyl-L-arginine + 2 H2O + 2 H(+) = N(2)-succinyl-L-ornithine + 2 NH4(+) + CO2. It functions in the pathway amino-acid degradation; L-arginine degradation via AST pathway; L-glutamate and succinate from L-arginine: step 2/5. In terms of biological role, catalyzes the hydrolysis of N(2)-succinylarginine into N(2)-succinylornithine, ammonia and CO(2). In Novosphingobium aromaticivorans (strain ATCC 700278 / DSM 12444 / CCUG 56034 / CIP 105152 / NBRC 16084 / F199), this protein is N-succinylarginine dihydrolase.